The following is a 216-amino-acid chain: Probable transaldolase (216 aa).

Lys83 (schiff-base intermediate with substrate) is an active-site residue.

This sequence belongs to the transaldolase family. Type 3B subfamily.

It localises to the cytoplasm. It carries out the reaction D-sedoheptulose 7-phosphate + D-glyceraldehyde 3-phosphate = D-erythrose 4-phosphate + beta-D-fructose 6-phosphate. It functions in the pathway carbohydrate degradation; pentose phosphate pathway; D-glyceraldehyde 3-phosphate and beta-D-fructose 6-phosphate from D-ribose 5-phosphate and D-xylulose 5-phosphate (non-oxidative stage): step 2/3. Its function is as follows. Transaldolase is important for the balance of metabolites in the pentose-phosphate pathway. This Hyphomonas neptunium (strain ATCC 15444) protein is Probable transaldolase.